The following is a 213-amino-acid chain: Histone H1 (213 aa).

Positions 1–25 (MAAATASAAATPAKKAAPKKPAAAP) are enriched in low complexity. Disordered regions lie at residues 1–30 (MAAA…HPSY) and 81–213 (GEFV…AKSS). Residues 26 to 97 (EHPSYKEMLT…GPSGTVKLAK (72 aa)) enclose the H15 domain. Composition is skewed to low complexity over residues 102–113 (AAAPKKPAAKKA), 123–137 (KKAA…PKSA), 157–176 (KKAA…APVK), and 203–213 (PKKAATPAKSS).

This sequence belongs to the histone H1/H5 family.

It is found in the nucleus. Its subcellular location is the chromosome. Its function is as follows. Could act as an H1-type linker histone. This is Histone H1 from Ascobolus immersus.